A 59-amino-acid chain; its full sequence is U-scoloptoxin(23)-Er2a (59 aa).

It belongs to the scoloptoxin-23 family. In terms of processing, contains 1 disulfide bond. Expressed by the venom gland.

Its subcellular location is the secreted. In Ethmostigmus rubripes (Giant centipede), this protein is U-scoloptoxin(23)-Er2a.